Reading from the N-terminus, the 574-residue chain is Intraflagellar transport protein 56 homolog (574 aa).

TPR repeat units lie at residues 20–52 (AQKM…GNLD), 57–90 (DSLQ…DDAP), and 151–184 (LEDR…SPNL).

This sequence belongs to the IFT56 family. As to quaternary structure, component of the IFT complex B composed of at least che-2, che-13, dyf-1, dyf-3, dyf-6, dyf-11, dyf-13, ift-20, ift-74, ift-81, ifta-2, osm-1, osm-5 and osm-6.

The protein localises to the cell projection. It is found in the cilium. Functionally, component of the intraflagellar transport (IFT) complex B required for transport of proteins in the motile cilium. May be required for ciliary entrance and transport of specific ciliary cargo proteins such as che-3 which are related to motility. This is Intraflagellar transport protein 56 homolog from Caenorhabditis elegans.